The chain runs to 961 residues: Gamma-tubulin small complex component GCP2 (961 aa).

Residues 15 to 76 are disordered; that stretch reads NLHRSPKLAT…KPSIPPLKSE (62 aa). Polar residues predominate over residues 43 to 54; it reads LGSNVVSHPTRS. A compositionally biased stretch (basic and acidic residues) spans 55–65; that stretch reads SPEKTTDKPAD.

Belongs to the TUBGCP family. As to quaternary structure, component of the gamma-tubulin small complex (gamma-TuSC) composed of tubulin gamma chain, gamma-tubulin complex protein 2 (GCP2) and gamma-tubulin complex protein 3 (GCP3). Interacts with tubulin gamma chain.

It localises to the cytoplasm. The protein resides in the cytoskeleton. Its subcellular location is the flagellum axoneme. The protein localises to the flagellum basal body. Component of the gamma-tubulin small complex (gamma-TuSC) involved in microtubule (MT) nucleation for the formation of median bodies and in the biogenesis of flagella. Gamma-TuSC may be required for the correct positioning of EB1 within the trophozoites. This is Gamma-tubulin small complex component GCP2 from Giardia intestinalis (strain ATCC 50803 / WB clone C6) (Giardia lamblia).